A 209-amino-acid polypeptide reads, in one-letter code: Ribonuclease HII (209 aa).

Positions 7 to 198 (GPVAGVDEAG…VAKAHQEWLH (192 aa)) constitute an RNase H type-2 domain. A divalent metal cation-binding residues include Asp13, Glu14, and Asp107.

Belongs to the RNase HII family. It depends on Mn(2+) as a cofactor. The cofactor is Mg(2+).

The protein localises to the cytoplasm. The catalysed reaction is Endonucleolytic cleavage to 5'-phosphomonoester.. In terms of biological role, endonuclease that specifically degrades the RNA of RNA-DNA hybrids. The sequence is that of Ribonuclease HII from Corynebacterium glutamicum (strain R).